The primary structure comprises 75 residues: Small ribosomal subunit protein bS16c (75 aa).

Belongs to the bacterial ribosomal protein bS16 family.

The protein resides in the plastid. The protein localises to the chloroplast. The protein is Small ribosomal subunit protein bS16c of Cyanidioschyzon merolae (strain NIES-3377 / 10D) (Unicellular red alga).